A 690-amino-acid polypeptide reads, in one-letter code: Potassium-transporting ATPase ATP-binding subunit (690 aa).

A run of 4 helical transmembrane segments spans residues 49–69 (SPVM…CFVP), 72–92 (AVPT…VLFA), 229–249 (VALD…VVTL), and 253–273 (ALFA…VTLI). Residue Asp-317 is the 4-aspartylphosphate intermediate of the active site. Residues Asp-354, Glu-358, 385–392 (FSAETRLS), and Lys-403 contribute to the ATP site. Residues Asp-526 and Asp-530 each contribute to the Mg(2+) site. A run of 3 helical transmembrane segments spans residues 596–616 (FAIL…LNVM), 624–644 (AILS…PLAL), and 662–682 (LLIY…AIDL).

It belongs to the cation transport ATPase (P-type) (TC 3.A.3) family. Type IA subfamily. As to quaternary structure, the system is composed of three essential subunits: KdpA, KdpB and KdpC.

The protein localises to the cell inner membrane. It carries out the reaction K(+)(out) + ATP + H2O = K(+)(in) + ADP + phosphate + H(+). Functionally, part of the high-affinity ATP-driven potassium transport (or Kdp) system, which catalyzes the hydrolysis of ATP coupled with the electrogenic transport of potassium into the cytoplasm. This subunit is responsible for energy coupling to the transport system and for the release of the potassium ions to the cytoplasm. This is Potassium-transporting ATPase ATP-binding subunit from Pseudomonas aeruginosa (strain ATCC 15692 / DSM 22644 / CIP 104116 / JCM 14847 / LMG 12228 / 1C / PRS 101 / PAO1).